The chain runs to 118 residues: Transmembrane protein 243 (118 aa).

Residue Met1 is modified to N-acetylmethionine. A run of 3 helical transmembrane segments spans residues 32-52 (LVVG…AFVF), 62-82 (IFFA…IYWY), and 94-114 (LIYY…LYFH).

The protein belongs to the TMEM243 family. As to expression, widely expressed.

The protein localises to the membrane. The polypeptide is Transmembrane protein 243 (TMEM243) (Homo sapiens (Human)).